Here is a 215-residue protein sequence, read N- to C-terminus: MIQTFFDFPVYFKFFIGLFALVNPVGIIPVFISMTSYQTAAARNKTNLTANLSVAIILWISLFLGDTILQLFGISIDSFRIAGGILVVTIAMSMISGKLGEDKQNKQEKSETAVRESIGVVPLALPLMAGPGAISSTIVWGTRYHSISYLFGFFVAIALFALCCWGLFRMAPWLVRVLRQTGINVITRIMGLLLMALGIEFIVTGIKGIFPGLLN.

The next 6 helical transmembrane spans lie at 14 to 34, 54 to 74, 81 to 101, 120 to 140, 147 to 167, and 189 to 209; these read FFIG…FISM, VAII…LFGI, IAGG…KLGE, VVPL…TIVW, ISYL…CWGL, and IMGL…IKGI.

It belongs to the UPF0056 (MarC) family.

The protein localises to the cell membrane. The polypeptide is UPF0056 membrane protein YhcE (ychE) (Escherichia coli (strain K12)).